We begin with the raw amino-acid sequence, 100 residues long: Small ribosomal subunit protein uS14c (100 aa).

It belongs to the universal ribosomal protein uS14 family. In terms of assembly, part of the 30S ribosomal subunit.

The protein localises to the plastid. Its subcellular location is the chloroplast. Binds 16S rRNA, required for the assembly of 30S particles. In Cryptomeria japonica (Japanese cedar), this protein is Small ribosomal subunit protein uS14c.